The sequence spans 367 residues: uncharacterized protein (367 aa).

The FAD-binding PCMH-type domain occupies 1–96; the sequence is ITLHRLAELV…LTATLQLQPV (96 aa).

It to M.tuberculosis Rv3790.

This is an uncharacterized protein from Streptomyces coelicolor.